We begin with the raw amino-acid sequence, 434 residues long: Ribulose bisphosphate carboxylase-like protein (434 aa).

Residues K198, D200, and E201 each coordinate Mg(2+). The residue at position 198 (K198) is an N6-carboxylysine.

The protein belongs to the RuBisCO large chain family. Type IV subfamily. In terms of assembly, homodimer. Requires Mg(2+) as cofactor.

May be involved in sulfur metabolism and oxidative stress response. Does not show RuBisCO activity. In Chlorobaculum thiosulfatiphilum (Chlorobium limicola f.sp. thiosulfatophilum), this protein is Ribulose bisphosphate carboxylase-like protein.